We begin with the raw amino-acid sequence, 239 residues long: tRNA (guanine-N(7)-)-methyltransferase (239 aa).

The S-adenosyl-L-methionine site is built by glutamate 69, glutamate 94, aspartate 121, and aspartate 144. Aspartate 144 is an active-site residue. Substrate is bound by residues lysine 148, aspartate 180, and 217–220; that span reads TKFE.

This sequence belongs to the class I-like SAM-binding methyltransferase superfamily. TrmB family. As to quaternary structure, monomer.

It catalyses the reaction guanosine(46) in tRNA + S-adenosyl-L-methionine = N(7)-methylguanosine(46) in tRNA + S-adenosyl-L-homocysteine. It functions in the pathway tRNA modification; N(7)-methylguanine-tRNA biosynthesis. In terms of biological role, catalyzes the formation of N(7)-methylguanine at position 46 (m7G46) in tRNA. The sequence is that of tRNA (guanine-N(7)-)-methyltransferase from Buchnera aphidicola subsp. Acyrthosiphon pisum (strain Tuc7).